A 142-amino-acid polypeptide reads, in one-letter code: Glia maturation factor gamma (142 aa).

The residue at position 2 (serine 2) is an N-acetylserine. An ADF-H domain is found at 4 to 139 (SLVVCEVDPE…TETWLKEKLA (136 aa)).

Belongs to the actin-binding proteins ADF family. GMF subfamily.

The chain is Glia maturation factor gamma (Gmfg) from Mus musculus (Mouse).